We begin with the raw amino-acid sequence, 241 residues long: Octanoyltransferase (241 aa).

The 190-residue stretch at 38-227 folds into the BPL/LPL catalytic domain; it reads AGGPDTLLLL…AVCNALDGAL (190 aa). Residues 85–92, 157–159, and 170–172 each bind substrate; these read RGGKITWH, AIG, and GFA. Cys-188 serves as the catalytic Acyl-thioester intermediate.

The protein belongs to the LipB family.

Its subcellular location is the cytoplasm. It catalyses the reaction octanoyl-[ACP] + L-lysyl-[protein] = N(6)-octanoyl-L-lysyl-[protein] + holo-[ACP] + H(+). It functions in the pathway protein modification; protein lipoylation via endogenous pathway; protein N(6)-(lipoyl)lysine from octanoyl-[acyl-carrier-protein]: step 1/2. Its function is as follows. Catalyzes the transfer of endogenously produced octanoic acid from octanoyl-acyl-carrier-protein onto the lipoyl domains of lipoate-dependent enzymes. Lipoyl-ACP can also act as a substrate although octanoyl-ACP is likely to be the physiological substrate. The sequence is that of Octanoyltransferase from Mycobacterium ulcerans (strain Agy99).